Consider the following 93-residue polypeptide: SH3 domain-binding glutamic acid-rich-like protein 3 (93 aa).

S2 carries the N-acetylserine modification. S2 is a glycosylation site (O-linked (GalNAc...) serine). The region spanning 2-93 is the Glutaredoxin domain; it reads SGRRVYSTSV…NTLQEFLKLA (92 aa). O-linked (GalNAc...) threonine glycans are attached at residues T9 and T12.

This sequence belongs to the SH3BGR family. Homodimer. Interacts with MYO1C (via its IQ motifs); the interaction is dependent on calcium and takes place at membrane ruffles. May be glycosylated.

It localises to the cytoplasm. The protein resides in the cytosol. Its subcellular location is the cell projection. It is found in the ruffle membrane. The protein localises to the nucleus. Could act as a modulator of glutaredoxin biological activity. May play a role in cytoskeleton organization. The sequence is that of SH3 domain-binding glutamic acid-rich-like protein 3 (SH3BGRL3) from Pongo abelii (Sumatran orangutan).